Reading from the N-terminus, the 621-residue chain is Intermediate filament protein ifc-2 (621 aa).

Positions 20-55 (SGAYTSGFGGLVSGMSSAGAICTTQIRDAREREKRE) are head. Residues 52–400 (EKREIGLLND…VLLNGANVTT (349 aa)) enclose the IF rod domain. A coil 1A region spans residues 56 to 87 (IGLLNDRLADYIEKVRFLEAQNQCLSHDIDIL). A linker 1 region spans residues 88–100 (RRGFSGGGHVSGL). Residues 101–238 (YDTEIAQAKR…TENSTRIEQE (138 aa)) form a coil 1B region. The linker 12 stretch occupies residues 239–256 (LVFIRRDTTAENRDYFRH). Residues 257 to 400 (ELQAAIRDIR…VLLNGANVTT (144 aa)) form a coil 2 region. The tail stretch occupies residues 401–549 (YVSNTHPSGV…RVDVGGFRVE (149 aa)). In terms of domain architecture, LTD spans 508 to 621 (SGRSFHSWYL…EERAWFVYLN (114 aa)).

This sequence belongs to the intermediate filament family.

It is found in the cytoplasm. In terms of biological role, cytoplasmic intermediate filaments provide mechanical strength to cells. The polypeptide is Intermediate filament protein ifc-2 (Caenorhabditis briggsae).